The following is a 339-amino-acid chain: Glycerol-3-phosphate dehydrogenase [NAD(P)+] (339 aa).

NADPH contacts are provided by S15, Y16, H36, and K110. Positions 110, 139, and 141 each coordinate sn-glycerol 3-phosphate. A143 is a binding site for NADPH. 5 residues coordinate sn-glycerol 3-phosphate: K195, D248, S258, R259, and N260. K195 acts as the Proton acceptor in catalysis. R259 contributes to the NADPH binding site. V283 and E285 together coordinate NADPH.

This sequence belongs to the NAD-dependent glycerol-3-phosphate dehydrogenase family.

The protein resides in the cytoplasm. It carries out the reaction sn-glycerol 3-phosphate + NAD(+) = dihydroxyacetone phosphate + NADH + H(+). The enzyme catalyses sn-glycerol 3-phosphate + NADP(+) = dihydroxyacetone phosphate + NADPH + H(+). Its pathway is membrane lipid metabolism; glycerophospholipid metabolism. Its function is as follows. Catalyzes the reduction of the glycolytic intermediate dihydroxyacetone phosphate (DHAP) to sn-glycerol 3-phosphate (G3P), the key precursor for phospholipid synthesis. This chain is Glycerol-3-phosphate dehydrogenase [NAD(P)+], found in Serratia proteamaculans (strain 568).